Consider the following 586-residue polypeptide: Ezrin (586 aa).

An FERM domain is found at 2-296 (PKPINVRVTT…NHELYMRRRK (295 aa)). Position 60 is an N6-acetyllysine (lysine 60). Positions 115-120 (IYCPPE) match the [IL]-x-C-x-x-[DE] motif motif. Tyrosine 146 bears the Phosphotyrosine; by PDGFR mark. Positions 244–586 (EIRNISFNDK…KQRIDEFEAL (343 aa)) are interaction with SCYL3. The stretch at 302–462 (VQQMKAQARE…QDDLVKTKEE (161 aa)) forms a coiled coil. The interval 306–341 (KAQAREEKHQKQLERQQLETEKKRRETVEREKEQMM) is disordered. Over residues 308–341 (QAREEKHQKQLERQQLETEKKRRETVEREKEQMM) the composition is skewed to basic and acidic residues. The residue at position 354 (tyrosine 354) is a Phosphotyrosine; by PDGFR. Serine 366 carries the phosphoserine modification. Tyrosine 478 is modified (phosphotyrosine). The interval 485–564 (VQESLQDEGA…NENMRQGRDK (80 aa)) is disordered. Basic and acidic residues predominate over residues 507 to 528 (GIRDDRNEEKRITEAEKNERVQ). Residues 530–539 (QLLTLSSELS) show a composition bias toward polar residues. At serine 535 the chain carries Phosphoserine. Basic and acidic residues predominate over residues 540–564 (QARDENKRTHNDIIHNENMRQGRDK). Residue threonine 567 is modified to Phosphothreonine; by ROCK2 and PKC/PRKCI.

In terms of assembly, monomer. Homodimer. Interacts with PALS1 and NHERF2. Found in a complex with EZR, PODXL and NHERF2. Interacts with MCC, PLEKHG6, PODXL, SCYL3/PACE1, NHERF1 and TMEM8B. Interacts (when phosphorylated) with FES/FPS. Interacts with dimeric S100P, the interaction may be activating through unmasking of F-actin binding sites. Identified in complexes that contain VIM, EZR, AHNAK, BFSP1, BFSP2, ANK2, PLEC, PRX and spectrin. Detected in a complex composed of at least EZR, AHNAK, PPL and PRX. Interacts with PDPN (via cytoplasmic domain); activates RHOA and promotes epithelial-mesenchymal transition. Interacts with SPN/CD43 cytoplasmic tail, CD44 and ICAM2. Interacts with SLC9A3; interaction targets SLC9A3 to the apical membrane. Interacts with SLC9A1; regulates interactions of SLC9A1 with cytoskeletal and promotes stress fiber formation. Interacts with CLIC5; may work together in a complex which also includes RDX and MYO6 to stabilize linkages between the plasma membrane and subjacent actin cytoskeleton at the base of stereocilia. In terms of processing, phosphorylated by tyrosine-protein kinases. Phosphorylation by ROCK2 suppresses the head-to-tail association of the N-terminal and C-terminal halves resulting in an opened conformation which is capable of actin and membrane-binding. Post-translationally, S-nitrosylation is induced by interferon-gamma and oxidatively-modified low-densitity lipoprotein (LDL(ox)) possibly implicating the iNOS-S100A8/9 transnitrosylase complex. Expressed in cerebral cortex, basal ganglia, hippocampus, hypophysis, and optic nerve. Weakly expressed in brain stem and diencephalon. Stronger expression was detected in gray matter of frontal lobe compared to white matter (at protein level). Component of the microvilli of intestinal epithelial cells. Preferentially expressed in astrocytes of hippocampus, frontal cortex, thalamus, parahippocampal cortex, amygdala, insula, and corpus callosum. Not detected in neurons in most tissues studied.

The protein resides in the apical cell membrane. The protein localises to the cell projection. Its subcellular location is the microvillus membrane. It is found in the ruffle membrane. It localises to the cytoplasm. The protein resides in the cell cortex. The protein localises to the cytoskeleton. Its subcellular location is the microvillus. Its activity is regulated as follows. A head-to-tail association, of the N-terminal and C-terminal halves results in a closed conformation (inactive form) which is incapable of actin or membrane-binding. Probably involved in connections of major cytoskeletal structures to the plasma membrane. In epithelial cells, required for the formation of microvilli and membrane ruffles on the apical pole. Along with PLEKHG6, required for normal macropinocytosis. In Homo sapiens (Human), this protein is Ezrin (EZR).